We begin with the raw amino-acid sequence, 124 residues long: Large ribosomal subunit protein bL12 (124 aa).

This sequence belongs to the bacterial ribosomal protein bL12 family. In terms of assembly, homodimer. Part of the ribosomal stalk of the 50S ribosomal subunit. Forms a multimeric L10(L12)X complex, where L10 forms an elongated spine to which 2 to 4 L12 dimers bind in a sequential fashion. Binds GTP-bound translation factors.

In terms of biological role, forms part of the ribosomal stalk which helps the ribosome interact with GTP-bound translation factors. Is thus essential for accurate translation. The polypeptide is Large ribosomal subunit protein bL12 (Borreliella burgdorferi (strain ATCC 35210 / DSM 4680 / CIP 102532 / B31) (Borrelia burgdorferi)).